Reading from the N-terminus, the 608-residue chain is Mitochondrial import receptor subunit TOM70 (608 aa).

At alanine 2 the chain carries N-acetylalanine. The Mitochondrial intermembrane segment spans residues 2–38 (AASKPVEAAVVAAAVPSSGSGVGGGGTAGPGTGGLPR). A helical transmembrane segment spans residues 39-59 (WQLALAVGAPLLLGAGAIYLW). The Cytoplasmic segment spans residues 60 to 608 (SRQQRRREAR…KKYGLKPPTL (549 aa)). A disordered region spans residues 67–107 (EARGRGDASGLKRNSERKTPEGRASPAPGSGHPEGPGAHLD). Position 71 is an omega-N-methylarginine (arginine 71). Phosphoserine is present on residues serine 91, serine 96, and serine 110. 2 TPR repeats span residues 114-147 (AQAA…CPTE) and 153-186 (STFY…NPKY). An N6-acetyllysine modification is found at lysine 185. Lysine 275 is covalently cross-linked (Glycyl lysine isopeptide (Lys-Gly) (interchain with G-Cter in SUMO2)). 8 TPR repeats span residues 294–327 (ENSG…EGKY), 329–362 (AEAL…KEAN), 367–400 (ANAL…DPQN), 401–434 (ADVY…RPES), 440–475 (QKCF…FPRC), 476–509 (AEGY…EPDN), 511–544 (TTYV…DNKC), and 545–578 (DFAY…AKSE). Serine 434 carries the phosphoserine modification.

The protein belongs to the Tom70 family. Forms part of the preprotein translocase complex of the outer mitochondrial membrane (TOM complex) which consists of at least 7 different proteins (TOMM5, TOMM6, TOMM7, TOMM20, TOMM22, TOMM40 and TOMM70). Interacts with CAPN8. Interacts with TRADD, TRAF6 and STING. Interacts with MAVS; the interaction is enhanced by Sendai virus infection. Interacts with HSPA8 and HSP90AA1; both interactions are required for preprotein mitochondrial import. The interaction with HSP90AA1 is direct and mediates the association of TOMM70 with IRF3 and TBK1. Upon mitochondrial depolarization, interacts with PINK1; the interaction is required for PINK1-TOM-TIM23 supercomplex formation which is critical for PINK1 stabilization at the outer mitochondrial membrane, kinase activation and downstream mitophagy. In terms of assembly, (Microbial infection) Interacts (via C-terminus) with SARS coronaviru/SARS-CoV and SARS coronavirus-2/SARS-CoV-2 virus protein ORF9b. As to quaternary structure, (Microbial infection) Interacts with parasite T.gondii RH strain MAF1b1; the interaction impairs TOMM70 import activity, enables the parasite to associate with the host mitochondria and facilitates the association of MAF1b1 with MIB complex component SAMM50, promoting the formation of SPOTs (structures positive for outer mitochondrial membrane (OMM)); the interaction is probably indirect.

The protein localises to the mitochondrion outer membrane. Functionally, acts as a receptor of the preprotein translocase complex of the outer mitochondrial membrane (TOM complex). Recognizes and mediates the translocation of mitochondrial preproteins from the cytosol into the mitochondria in a chaperone dependent manner. Mediates TBK1 and IRF3 activation induced by MAVS in response to Sendai virus infection and promotes host antiviral responses during virus infection. Upon Sendai virus infection, recruits HSP90AA1:IRF3:BAX in mitochondrion and the complex induces apoptosis. In Homo sapiens (Human), this protein is Mitochondrial import receptor subunit TOM70.